Here is a 264-residue protein sequence, read N- to C-terminus: COP9 signalosome complex subunit 7b (264 aa).

At Ala2 the chain carries N-acetylalanine. In terms of domain architecture, PCI spans 2–159 (AGEQKPSSNL…QLLEVDFCIG (158 aa)). A coiled-coil region spans residues 188–237 (IEQQVLRANQYKENHNRTQQQVEAEVTNIKKTLKATASSSAQEMEQQLAE). Positions 223–232 (TASSSAQEME) are enriched in polar residues. Residues 223–264 (TASSSAQEMEQQLAERECPPHAEQRQPTKKMSKVKGLVSSRH) are disordered. A compositionally biased stretch (basic and acidic residues) spans 235-248 (LAERECPPHAEQRQ). Ser261 bears the Phosphothreonine mark. Phosphoserine is present on Arg263.

The protein belongs to the CSN7/EIF3M family. CSN7 subfamily. In terms of assembly, component of the CSN complex, composed of COPS1/GPS1, COPS2, COPS3, COPS4, COPS5, COPS6, COPS7 (COPS7A or COPS7B), COPS8 and COPS9 isoform 1. In the complex, it probably interacts directly with COPS1, COPS2, COPS4, COPS5, COPS6 and COPS8. Interacts with EIF3S6. (Microbial infection) Interacts with vaccinia virus protein C9L.

The protein localises to the cytoplasm. The protein resides in the nucleus. Component of the COP9 signalosome complex (CSN), a complex involved in various cellular and developmental processes. The CSN complex is an essential regulator of the ubiquitin (Ubl) conjugation pathway by mediating the deneddylation of the cullin subunits of SCF-type E3 ligase complexes, leading to decrease the Ubl ligase activity of SCF-type complexes such as SCF, CSA or DDB2. The complex is also involved in phosphorylation of p53/TP53, JUN, I-kappa-B-alpha/NFKBIA, ITPK1 and IRF8/ICSBP, possibly via its association with CK2 and PKD kinases. CSN-dependent phosphorylation of TP53 and JUN promotes and protects degradation by the Ubl system, respectively. This is COP9 signalosome complex subunit 7b (COPS7B) from Homo sapiens (Human).